Consider the following 445-residue polypeptide: ATP-dependent protease ATPase subunit HslU (445 aa).

ATP-binding positions include Ile-17, 59–64 (GVGKTE), Asp-254, Glu-319, and Arg-391.

It belongs to the ClpX chaperone family. HslU subfamily. A double ring-shaped homohexamer of HslV is capped on each side by a ring-shaped HslU homohexamer. The assembly of the HslU/HslV complex is dependent on binding of ATP.

It localises to the cytoplasm. Its function is as follows. ATPase subunit of a proteasome-like degradation complex; this subunit has chaperone activity. The binding of ATP and its subsequent hydrolysis by HslU are essential for unfolding of protein substrates subsequently hydrolyzed by HslV. HslU recognizes the N-terminal part of its protein substrates and unfolds these before they are guided to HslV for hydrolysis. This chain is ATP-dependent protease ATPase subunit HslU, found in Pseudomonas syringae pv. tomato (strain ATCC BAA-871 / DC3000).